Reading from the N-terminus, the 222-residue chain is Ribosomal RNA small subunit methyltransferase G (222 aa).

Residues glycine 80, leucine 85, and arginine 149 each coordinate S-adenosyl-L-methionine.

This sequence belongs to the methyltransferase superfamily. RNA methyltransferase RsmG family.

The protein resides in the cytoplasm. Its function is as follows. Specifically methylates the N7 position of a guanine in 16S rRNA. The protein is Ribosomal RNA small subunit methyltransferase G of Treponema pallidum (strain Nichols).